The chain runs to 303 residues: 1D-myo-inositol 2-acetamido-2-deoxy-alpha-D-glucopyranoside deacetylase (303 aa).

3 residues coordinate Zn(2+): histidine 13, aspartate 16, and histidine 147.

It belongs to the MshB deacetylase family. Zn(2+) is required as a cofactor.

It catalyses the reaction 1D-myo-inositol 2-acetamido-2-deoxy-alpha-D-glucopyranoside + H2O = 1D-myo-inositol 2-amino-2-deoxy-alpha-D-glucopyranoside + acetate. Functionally, catalyzes the deacetylation of 1D-myo-inositol 2-acetamido-2-deoxy-alpha-D-glucopyranoside (GlcNAc-Ins) in the mycothiol biosynthesis pathway. The sequence is that of 1D-myo-inositol 2-acetamido-2-deoxy-alpha-D-glucopyranoside deacetylase from Mycobacterium tuberculosis (strain ATCC 25177 / H37Ra).